A 108-amino-acid polypeptide reads, in one-letter code: Heme-degrading monooxygenase HmoA (108 aa).

The 94-residue stretch at 2 to 95 (FVQLRKMTVK…DYLISTEVSM (94 aa)) folds into the ABM domain. H76 serves as a coordination point for heme.

This sequence belongs to the antibiotic biosynthesis monooxygenase family. Homodimer.

The protein resides in the cytoplasm. It catalyses the reaction heme b + 3 reduced [NADPH--hemoprotein reductase] + 3 O2 = biliverdin IXalpha + CO + Fe(2+) + 3 oxidized [NADPH--hemoprotein reductase] + 3 H2O + H(+). Allows bacterial pathogens to use the host heme as an iron source. Catalyzes the oxidative degradation of the heme macrocyclic porphyrin ring in the presence of a suitable electron donor such as ascorbate or NADPH--cytochrome P450 reductase, with subsequent release of free iron. This chain is Heme-degrading monooxygenase HmoA (hmoA), found in Bacillus subtilis (strain 168).